We begin with the raw amino-acid sequence, 313 residues long: Probable cell division protein WhiA (313 aa).

A DNA-binding region (H-T-H motif) is located at residues 277-311 (SLKEVAAQVPDGPISKSGVNHRFQKIREMAQQLKE).

The protein belongs to the WhiA family.

In terms of biological role, involved in cell division and chromosome segregation. In Lactobacillus gasseri (strain ATCC 33323 / DSM 20243 / BCRC 14619 / CIP 102991 / JCM 1131 / KCTC 3163 / NCIMB 11718 / NCTC 13722 / AM63), this protein is Probable cell division protein WhiA.